We begin with the raw amino-acid sequence, 216 residues long: Vascular endothelial growth factor A (216 aa).

An N-terminal signal peptide occupies residues 1–26 (MNFLLTWIHWGLAALLYFHNAKVLQA). 3 disulfide bridges follow: cysteine 52-cysteine 94, cysteine 83-cysteine 128, and cysteine 87-cysteine 130. N-linked (GlcNAc...) asparagine glycosylation occurs at asparagine 101. The segment at 140 to 161 (QEKKSKREKGKGQKRKRKRGRY) is disordered. Residues 145–161 (KREKGKGQKRKRKRGRY) show a composition bias toward basic residues.

The protein belongs to the PDGF/VEGF growth factor family. In terms of assembly, homodimer; disulfide-linked. Also found as heterodimer with PGF. Interacts to the FLT1/VEGFR1 and KDR/VEGFR2 receptors, heparan sulfate and heparin. In terms of tissue distribution, expressed in venom gland, heart, brain, liver, skeletal muscle and kidney.

The protein localises to the secreted. Functionally, growth factor active in angiogenesis, vasculogenesis and endothelial cell growth. Induces endothelial cell proliferation, promotes cell migration, inhibits apoptosis and induces permeabilization of blood vessels. The polypeptide is Vascular endothelial growth factor A (Protobothrops flavoviridis (Habu)).